Consider the following 64-residue polypeptide: Translational regulator CsrA (64 aa).

This sequence belongs to the CsrA/RsmA family. Homodimer; the beta-strands of each monomer intercalate to form a hydrophobic core, while the alpha-helices form wings that extend away from the core.

The protein localises to the cytoplasm. A key translational regulator that binds mRNA to regulate translation initiation and/or mRNA stability. Mediates global changes in gene expression, shifting from rapid growth to stress survival by linking envelope stress, the stringent response and the catabolite repression systems. Usually binds in the 5'-UTR; binding at or near the Shine-Dalgarno sequence prevents ribosome-binding, repressing translation, binding elsewhere in the 5'-UTR can activate translation and/or stabilize the mRNA. Its function is antagonized by small RNA(s). The chain is Translational regulator CsrA from Thioalkalivibrio sulfidiphilus (strain HL-EbGR7).